We begin with the raw amino-acid sequence, 1123 residues long: Leucine-rich repeat receptor-like protein kinase PEPR1 (1123 aa).

The N-terminal stretch at Met-1–Cys-28 is a signal peptide. Residues Leu-29–Gln-769 lie on the Extracellular side of the membrane. The stretch at Ser-31–Thr-53 is one LRR 1 repeat. N-linked (GlcNAc...) asparagine glycosylation is found at Asn-57, Asn-81, Asn-110, and Asn-121. 7 LRR repeats span residues Ser-74–Leu-98, Lys-99–Cys-122, Lys-124–Ser-145, Leu-146–Ile-170, Pro-171–Ala-194, Glu-196–Ser-218, and Ser-219–Gly-243. Residues Asn-182 and Asn-217 are each glycosylated (N-linked (GlcNAc...) asparagine). Residues Asn-244, Asn-252, Asn-289, Asn-302, Asn-316, Asn-321, and Asn-337 are each glycosylated (N-linked (GlcNAc...) asparagine). LRR repeat units lie at residues Leu-245–Cys-266, Lys-267–Cys-290, Ser-292–Leu-314, Lys-315–Cys-338, Ser-340–Leu-362, Arg-363–Ser-386, Ser-388–Met-410, Lys-412–Asn-434, Ser-435–Gly-458, Arg-459–Cys-482, Thr-484–Asp-505, His-506–Cys-529, Lys-530–Leu-553, Gln-554–Cys-577, Ser-579–Asn-600, Trp-601–Leu-625, Lys-626–Glu-650, Leu-652–Leu-674, Ile-675–Gly-696, and Leu-697–Gln-721. N-linked (GlcNAc...) asparagine glycans are attached at residues Asn-398, Asn-420, and Asn-434. N-linked (GlcNAc...) asparagine glycosylation occurs at Asn-494. Residues Asn-531, Asn-536, Asn-560, Asn-591, and Asn-597 are each glycosylated (N-linked (GlcNAc...) asparagine). N-linked (GlcNAc...) asparagine glycosylation is found at Asn-681 and Asn-686. Asn-745 carries N-linked (GlcNAc...) asparagine glycosylation. A helical membrane pass occupies residues Ile-770 to Phe-790. The Cytoplasmic segment spans residues Ile-791–Arg-1123. The residue at position 824 (Thr-824) is a Phosphothreonine. The 289-residue stretch at Leu-827 to Arg-1115 folds into the Protein kinase domain. Residues Ile-833–Val-841 and Lys-855 contribute to the ATP site. 2 positions are modified to phosphotyrosine: Tyr-901 and Tyr-941. Asp-954 acts as the Proton acceptor in catalysis. Tyr-995 carries the phosphotyrosine modification.

The protein belongs to the protein kinase superfamily. Ser/Thr protein kinase family. Interacts with PEP1 and BAK1. Interacts with BIK1 and PBL1. Post-translationally, N-glycosylated.

The protein resides in the cell membrane. It catalyses the reaction L-seryl-[protein] + ATP = O-phospho-L-seryl-[protein] + ADP + H(+). The catalysed reaction is L-threonyl-[protein] + ATP = O-phospho-L-threonyl-[protein] + ADP + H(+). In terms of biological role, acts as a receptor for PEP defense peptides. Unlike typical immune receptors, senses an endogenous elicitor that potentiates pathogen-associated molecular pattern (PAMP)-inducible plant responses. Involved in PAMP-triggered immunity (PTI) signaling. Interacts with and phosphorylates the kinase BIK1, a central rate-limiting kinase in PTI signaling. The chain is Leucine-rich repeat receptor-like protein kinase PEPR1 (PEPR1) from Arabidopsis thaliana (Mouse-ear cress).